The sequence spans 201 residues: UPF0177 protein YajF (201 aa).

Transmembrane regions (helical) follow at residues 10-30 (TVIL…YVEY), 44-64 (ITVN…MLGI), 82-102 (ILIL…SQFI), 119-139 (VMGS…APIL), and 159-179 (FVFS…VFLI).

It belongs to the UPF0177 family.

It localises to the cell membrane. This chain is UPF0177 protein YajF (yajF), found in Lactococcus lactis subsp. lactis (strain IL1403) (Streptococcus lactis).